Here is a 955-residue protein sequence, read N- to C-terminus: Glycine dehydrogenase (decarboxylating) (955 aa).

N6-(pyridoxal phosphate)lysine is present on K702.

The protein belongs to the GcvP family. In terms of assembly, the glycine cleavage system is composed of four proteins: P, T, L and H. Requires pyridoxal 5'-phosphate as cofactor.

It carries out the reaction N(6)-[(R)-lipoyl]-L-lysyl-[glycine-cleavage complex H protein] + glycine + H(+) = N(6)-[(R)-S(8)-aminomethyldihydrolipoyl]-L-lysyl-[glycine-cleavage complex H protein] + CO2. Its function is as follows. The glycine cleavage system catalyzes the degradation of glycine. The P protein binds the alpha-amino group of glycine through its pyridoxal phosphate cofactor; CO(2) is released and the remaining methylamine moiety is then transferred to the lipoamide cofactor of the H protein. This chain is Glycine dehydrogenase (decarboxylating), found in Stenotrophomonas maltophilia (strain R551-3).